The sequence spans 213 residues: Thiamine-phosphate synthase (213 aa).

4-amino-2-methyl-5-(diphosphooxymethyl)pyrimidine is bound by residues 38-42 (QLREK) and Asp70. Mg(2+) contacts are provided by Asp71 and Glu90. Position 109 (Ser109) interacts with 4-amino-2-methyl-5-(diphosphooxymethyl)pyrimidine. A 2-[(2R,5Z)-2-carboxy-4-methylthiazol-5(2H)-ylidene]ethyl phosphate-binding site is contributed by 135–137 (TQT). Lys138 contributes to the 4-amino-2-methyl-5-(diphosphooxymethyl)pyrimidine binding site. Residues Gly165 and 185–186 (VS) contribute to the 2-[(2R,5Z)-2-carboxy-4-methylthiazol-5(2H)-ylidene]ethyl phosphate site.

Belongs to the thiamine-phosphate synthase family. Mg(2+) is required as a cofactor.

The catalysed reaction is 2-[(2R,5Z)-2-carboxy-4-methylthiazol-5(2H)-ylidene]ethyl phosphate + 4-amino-2-methyl-5-(diphosphooxymethyl)pyrimidine + 2 H(+) = thiamine phosphate + CO2 + diphosphate. The enzyme catalyses 2-(2-carboxy-4-methylthiazol-5-yl)ethyl phosphate + 4-amino-2-methyl-5-(diphosphooxymethyl)pyrimidine + 2 H(+) = thiamine phosphate + CO2 + diphosphate. It carries out the reaction 4-methyl-5-(2-phosphooxyethyl)-thiazole + 4-amino-2-methyl-5-(diphosphooxymethyl)pyrimidine + H(+) = thiamine phosphate + diphosphate. Its pathway is cofactor biosynthesis; thiamine diphosphate biosynthesis; thiamine phosphate from 4-amino-2-methyl-5-diphosphomethylpyrimidine and 4-methyl-5-(2-phosphoethyl)-thiazole: step 1/1. Functionally, condenses 4-methyl-5-(beta-hydroxyethyl)thiazole monophosphate (THZ-P) and 2-methyl-4-amino-5-hydroxymethyl pyrimidine pyrophosphate (HMP-PP) to form thiamine monophosphate (TMP). In Lacticaseibacillus paracasei (strain ATCC 334 / BCRC 17002 / CCUG 31169 / CIP 107868 / KCTC 3260 / NRRL B-441) (Lactobacillus paracasei), this protein is Thiamine-phosphate synthase.